We begin with the raw amino-acid sequence, 553 residues long: Putative transport protein KPN78578_40470 (553 aa).

5 helical membrane passes run Ile4–Val24, Gly28–Asp48, Phe65–Ser85, Leu95–Phe115, and Met158–Val178. RCK C-terminal domains lie at Arg192–Gln276 and Ala279–Asn361. Helical transmembrane passes span Met371 to Ile391, Ala403 to Phe425, Leu437 to Thr457, Leu464 to Leu484, Tyr493 to Ala513, and Pro532 to Leu552.

This sequence belongs to the AAE transporter (TC 2.A.81) family. YidE subfamily.

It localises to the cell membrane. In Klebsiella pneumoniae subsp. pneumoniae (strain ATCC 700721 / MGH 78578), this protein is Putative transport protein KPN78578_40470.